The following is a 232-amino-acid chain: 7-cyano-7-deazaguanine synthase (232 aa).

8–18 provides a ligand contact to ATP; that stretch reads FSGGQDSTTCL. Residues C189, C198, C201, and C204 each contribute to the Zn(2+) site.

This sequence belongs to the QueC family. It depends on Zn(2+) as a cofactor.

It catalyses the reaction 7-carboxy-7-deazaguanine + NH4(+) + ATP = 7-cyano-7-deazaguanine + ADP + phosphate + H2O + H(+). Its pathway is purine metabolism; 7-cyano-7-deazaguanine biosynthesis. Catalyzes the ATP-dependent conversion of 7-carboxy-7-deazaguanine (CDG) to 7-cyano-7-deazaguanine (preQ(0)). The polypeptide is 7-cyano-7-deazaguanine synthase (Yersinia pseudotuberculosis serotype O:1b (strain IP 31758)).